The chain runs to 368 residues: Histidinol-phosphate aminotransferase (368 aa).

N6-(pyridoxal phosphate)lysine is present on lysine 228.

It belongs to the class-II pyridoxal-phosphate-dependent aminotransferase family. Histidinol-phosphate aminotransferase subfamily. Requires pyridoxal 5'-phosphate as cofactor.

It catalyses the reaction L-histidinol phosphate + 2-oxoglutarate = 3-(imidazol-4-yl)-2-oxopropyl phosphate + L-glutamate. It functions in the pathway amino-acid biosynthesis; L-histidine biosynthesis; L-histidine from 5-phospho-alpha-D-ribose 1-diphosphate: step 7/9. The sequence is that of Histidinol-phosphate aminotransferase from Methanosarcina mazei (strain ATCC BAA-159 / DSM 3647 / Goe1 / Go1 / JCM 11833 / OCM 88) (Methanosarcina frisia).